Reading from the N-terminus, the 297-residue chain is Putative heme-binding peroxidase (297 aa).

Residue His-74 is the Proton acceptor of the active site. His-198 is a heme b binding site. The active-site Tryptophan radical intermediate is Trp-214.

The protein belongs to the peroxidase family. Cytochrome c peroxidase subfamily. It depends on heme b as a cofactor.

Its function is as follows. Destroys radicals which are normally produced within the cells and which are toxic to biological systems. The sequence is that of Putative heme-binding peroxidase from Yarrowia lipolytica (strain CLIB 122 / E 150) (Yeast).